The following is a 224-amino-acid chain: MTVIVLSGPIGAGKSSLTGILSKYLGTNPFYESVDDNPVLPLFYENPKKYAFLLQVYFLNTRFRSIKSALTDDNNVLDRSIYEDALFFQMNADIGRATPEEVDTYYELLHNMMSELDRMPKKNPDLLVHIDVSYDTMLKRIQKRGRNYEQLSYDPTLEDYYKRLLRYYKPWYEKYDYSPKMTIDGDKLDFMASEEDRQEVLNQIVAKLKEMGKFEDDWKPNLVK.

8-16 (GPIGAGKSS) provides a ligand contact to ATP. Residues E32, Y44, and Q55 each coordinate substrate. D78 (proton acceptor) is an active-site residue. Substrate-binding residues include R79, D84, and E149.

It belongs to the DCK/DGK family. In terms of assembly, heterodimer of a deoxyadenosine (DAK) and a deoxyguanosine kinase (DGK).

The catalysed reaction is 2'-deoxyguanosine + ATP = dGMP + ADP + H(+). Functionally, DGK/DAK plays an essential role in generating the deoxyribonucleotide precursors, dGTP and dATP, for DNA metabolism. In Lactobacillus johnsonii (strain CNCM I-12250 / La1 / NCC 533), this protein is Deoxyguanosine kinase.